The primary structure comprises 132 residues: Large ribosomal subunit protein bL12 (132 aa).

Over residues 102–126 (APKPIKEATNKDDAESIKKQLEEAG) the composition is skewed to basic and acidic residues. Residues 102–132 (APKPIKEATNKDDAESIKKQLEEAGAKASVK) are disordered.

This sequence belongs to the bacterial ribosomal protein bL12 family. Homodimer. Part of the ribosomal stalk of the 50S ribosomal subunit. Forms a multimeric L10(L12)X complex, where L10 forms an elongated spine to which 2 to 4 L12 dimers bind in a sequential fashion. Binds GTP-bound translation factors.

Forms part of the ribosomal stalk which helps the ribosome interact with GTP-bound translation factors. Is thus essential for accurate translation. The polypeptide is Large ribosomal subunit protein bL12 (Rippkaea orientalis (strain PCC 8801 / RF-1) (Cyanothece sp. (strain PCC 8801))).